Consider the following 127-residue polypeptide: Small ribosomal subunit protein uS12 (127 aa).

A 3-methylthioaspartic acid modification is found at aspartate 89.

This sequence belongs to the universal ribosomal protein uS12 family. As to quaternary structure, part of the 30S ribosomal subunit. Contacts proteins S8 and S17. May interact with IF1 in the 30S initiation complex.

With S4 and S5 plays an important role in translational accuracy. In terms of biological role, interacts with and stabilizes bases of the 16S rRNA that are involved in tRNA selection in the A site and with the mRNA backbone. Located at the interface of the 30S and 50S subunits, it traverses the body of the 30S subunit contacting proteins on the other side and probably holding the rRNA structure together. The combined cluster of proteins S8, S12 and S17 appears to hold together the shoulder and platform of the 30S subunit. In Akkermansia muciniphila (strain ATCC BAA-835 / DSM 22959 / JCM 33894 / BCRC 81048 / CCUG 64013 / CIP 107961 / Muc), this protein is Small ribosomal subunit protein uS12.